The chain runs to 105 residues: Large ribosomal subunit protein uL24 (105 aa).

Belongs to the universal ribosomal protein uL24 family. As to quaternary structure, part of the 50S ribosomal subunit.

Its function is as follows. One of two assembly initiator proteins, it binds directly to the 5'-end of the 23S rRNA, where it nucleates assembly of the 50S subunit. Functionally, one of the proteins that surrounds the polypeptide exit tunnel on the outside of the subunit. The protein is Large ribosomal subunit protein uL24 of Thermotoga maritima (strain ATCC 43589 / DSM 3109 / JCM 10099 / NBRC 100826 / MSB8).